The following is a 932-amino-acid chain: Protocadherin gamma-A2 (932 aa).

The first 28 residues, 1 to 28 (MAALQKLPHCRKLVLLCFLLATLWEARA), serve as a signal peptide directing secretion. 6 consecutive Cadherin domains span residues 29–133 (GQIR…APRF), 134–242 (GVEE…APVF), 243–347 (TQPE…APEF), 348–452 (YMTS…APAF), 453–562 (SRTS…APEI), and 570–682 (DGST…EPSA). Over 29 to 692 (GQIRYSVREE…IPNDSDLTLY (664 aa)) the chain is Extracellular. 2 N-linked (GlcNAc...) asparagine glycosylation sites follow: Asn-419 and Asn-545. N-linked (GlcNAc...) asparagine glycosylation is present at Asn-685. A helical membrane pass occupies residues 693–713 (LVVAVAAVSCVFLAFVIVLLA). Residues 714 to 932 (HRLRRWHKSR…KKKSGKKEKK (219 aa)) are Cytoplasmic-facing. Disordered regions lie at residues 798–841 (LEEE…WPNN) and 902–932 (ATLT…KEKK). Polar residues predominate over residues 806 to 841 (FSQQAPPNTDWRFSQAQRPGTSGSQNGDDTGTWPNN). Over residues 922 to 932 (NKKKSGKKEKK) the composition is skewed to basic residues.

It localises to the cell membrane. Functionally, potential calcium-dependent cell-adhesion protein. May be involved in the establishment and maintenance of specific neuronal connections in the brain. In Homo sapiens (Human), this protein is Protocadherin gamma-A2 (PCDHGA2).